The following is a 430-amino-acid chain: Protein AST2 (430 aa).

Its function is as follows. Lipid raft-associated protein involved in the targeting of PMA1 from Golgi to the plasma membrane. May induce clustering of PMA1, which facilitates partition of PMA1 into lipid rafts after leaving the ER its and transport to the cell surface. The protein is Protein AST2 of Saccharomyces cerevisiae (strain ATCC 204508 / S288c) (Baker's yeast).